The sequence spans 445 residues: Phosphoglucosamine mutase (445 aa).

The active-site Phosphoserine intermediate is serine 102. Residues serine 102, aspartate 240, aspartate 242, and aspartate 244 each coordinate Mg(2+). Serine 102 is modified (phosphoserine).

This sequence belongs to the phosphohexose mutase family. Mg(2+) serves as cofactor. In terms of processing, activated by phosphorylation.

It carries out the reaction alpha-D-glucosamine 1-phosphate = D-glucosamine 6-phosphate. In terms of biological role, catalyzes the conversion of glucosamine-6-phosphate to glucosamine-1-phosphate. This is Phosphoglucosamine mutase from Mycobacterium sp. (strain JLS).